Here is a 657-residue protein sequence, read N- to C-terminus: Probable Xaa-Pro aminopeptidase P (657 aa).

Positions 453, 464, 562, and 576 each coordinate Mn(2+).

Belongs to the peptidase M24B family. Mn(2+) serves as cofactor.

The catalysed reaction is Release of any N-terminal amino acid, including proline, that is linked to proline, even from a dipeptide or tripeptide.. Catalyzes the removal of a penultimate prolyl residue from the N-termini of peptides. The sequence is that of Probable Xaa-Pro aminopeptidase P (ampp) from Talaromyces marneffei (strain ATCC 18224 / CBS 334.59 / QM 7333) (Penicillium marneffei).